We begin with the raw amino-acid sequence, 388 residues long: Probable serine/threonine-protein kinase PBL20 (388 aa).

Cys-3 is lipidated: S-palmitoyl cysteine. The 282-residue stretch at 91 to 372 (FSRKLKIGEG…FVVESLTNII (282 aa)) folds into the Protein kinase domain. ATP is bound by residues 97 to 105 (IGEGGFGSV) and Lys-128. Asp-221 functions as the Proton acceptor in the catalytic mechanism.

The protein belongs to the protein kinase superfamily. Ser/Thr protein kinase family.

It localises to the cell membrane. The catalysed reaction is L-seryl-[protein] + ATP = O-phospho-L-seryl-[protein] + ADP + H(+). The enzyme catalyses L-threonyl-[protein] + ATP = O-phospho-L-threonyl-[protein] + ADP + H(+). In terms of biological role, may be involved in plant defense signaling. In Arabidopsis thaliana (Mouse-ear cress), this protein is Probable serine/threonine-protein kinase PBL20.